We begin with the raw amino-acid sequence, 244 residues long: Probable fimbrial assembly protein FimC, serogroup H1 (244 aa).

The sequence is that of Probable fimbrial assembly protein FimC, serogroup H1 (fimC) from Dichelobacter nodosus (Bacteroides nodosus).